A 317-amino-acid chain; its full sequence is Zinc finger protein 771 (317 aa).

Lys-33 participates in a covalent cross-link: Glycyl lysine isopeptide (Lys-Gly) (interchain with G-Cter in SUMO2). C2H2-type zinc fingers lie at residues 63–85, 91–113, 119–141, 147–169, 175–197, 203–225, 231–253, and 259–281; these read HACP…ARTH, FACT…GRTH, YQCP…RRRH, YACA…LRVH, YACP…RRTH, YACA…RRVH, HRCA…ARTH, and YPCT…RRAH.

This sequence belongs to the krueppel C2H2-type zinc-finger protein family.

It localises to the nucleus. Functionally, may be involved in transcriptional regulation. This chain is Zinc finger protein 771 (Znf771), found in Mus musculus (Mouse).